Reading from the N-terminus, the 238-residue chain is 1-(5-phosphoribosyl)-5-[(5-phosphoribosylamino)methylideneamino] imidazole-4-carboxamide isomerase (238 aa).

The Proton acceptor role is filled by Asp-8. The active-site Proton donor is Asp-130.

It belongs to the HisA/HisF family.

The protein resides in the cytoplasm. It catalyses the reaction 1-(5-phospho-beta-D-ribosyl)-5-[(5-phospho-beta-D-ribosylamino)methylideneamino]imidazole-4-carboxamide = 5-[(5-phospho-1-deoxy-D-ribulos-1-ylimino)methylamino]-1-(5-phospho-beta-D-ribosyl)imidazole-4-carboxamide. Its pathway is amino-acid biosynthesis; L-histidine biosynthesis; L-histidine from 5-phospho-alpha-D-ribose 1-diphosphate: step 4/9. The polypeptide is 1-(5-phosphoribosyl)-5-[(5-phosphoribosylamino)methylideneamino] imidazole-4-carboxamide isomerase (Methanococcus maripaludis (strain C7 / ATCC BAA-1331)).